We begin with the raw amino-acid sequence, 410 residues long: Lissencephaly-1 homolog (410 aa).

A LisH domain is found at 7–39 (QQEELQLAVHAYLVEAGHAEAAAAMAKSANLGD). The stretch at 55-80 (TTITRLQKRNMELQAEVEELRSSARA) forms a coiled coil. WD repeat units lie at residues 104–143 (GHRL…FERS), 146–185 (GHTN…CTKT), 188–227 (GHDH…CLQT), 230–269 (GHSD…CKHV), 294–333 (MIFG…HLAR), 336–375 (GHDN…VSKT), and 378–410 (AHNH…WECN).

This sequence belongs to the WD repeat LIS1/nudF family.

It is found in the cytoplasm. The protein localises to the cytoskeleton. Its subcellular location is the microtubule organizing center. It localises to the centrosome. In terms of biological role, positively regulates the activity of the minus-end directed microtubule motor protein dynein. May enhance dynein-mediated microtubule sliding by targeting dynein to the microtubule plus end. Required for several dynein- and microtubule-dependent processes. This is Lissencephaly-1 homolog from Monosiga brevicollis (Choanoflagellate).